A 434-amino-acid chain; its full sequence is Attachment protein G3P (434 aa).

Positions 1 to 19 (MKRKIIAISLFLYIPLSNA) are cleaved as a signal peptide. The segment at 20 to 130 (DNWESITKSY…IQRSVPDEEP (111 aa)) is N1. 3 cysteine pairs are disulfide-bonded: cysteine 63–cysteine 98, cysteine 139–cysteine 167, and cysteine 177–cysteine 184. Residues 89 to 107 (QFRLVTGDTCVYNGSPGEK) form a G1 (Gly-rich linker) region. The segment at 132–200 (EQTPEEICEA…PTGYVPESGE (69 aa)) is N2. The disordered stretch occupies residues 191–260 (PTGYVPESGE…GSSGGSTGKS (70 aa)). Residues 209–258 (GDTGGTGEGGSDTGGDTGGGDTGGGSTGGDTGGSSGGGSSGGGSSGGSTG) are gly-rich linker. A compositionally biased stretch (gly residues) spans 211–257 (TGGTGEGGSDTGGDTGGGDTGGGSTGGDTGGSSGGGSSGGGSSGGST). CT stretches follow at residues 252 to 434 (SSGG…KGEQ) and 259 to 434 (KSLT…KGEQ). Residues 408-429 (VLSWVMYCLTFWYVFQSVTSLL) traverse the membrane as a helical segment.

It belongs to the inovirus G3P protein family. Interacts with G6P; this interaction is required for proper integration of G3P and G6P into the virion. Interacts with G8P. Interacts with the tip of the host pilus. Interacts (via N-terminus) with host TolA.

Its subcellular location is the virion. It localises to the host membrane. Plays essential roles both in the penetration of the viral genome into the bacterial host via pilus retraction and in the extrusion process. During the initial step of infection, G3P mediates adsorption of the phage to its primary receptor, the tip of host F-pilus. Attachment of the phage causes pilus retraction bringing the viral particle into close proximity of the host cell inner membrane. Subsequent interaction with the host entry receptors TolA (low affinity) and penetration of the viral DNA into the host cytoplasm. In the extrusion process, G3P mediates the release of the membrane-anchored virion from the cell via its C-terminal domain. This Escherichia coli (Bacteriophage IKe) protein is Attachment protein G3P (III).